Reading from the N-terminus, the 573-residue chain is Proline--tRNA ligase (573 aa).

This sequence belongs to the class-II aminoacyl-tRNA synthetase family. ProS type 1 subfamily. In terms of assembly, homodimer.

It is found in the cytoplasm. The enzyme catalyses tRNA(Pro) + L-proline + ATP = L-prolyl-tRNA(Pro) + AMP + diphosphate. In terms of biological role, catalyzes the attachment of proline to tRNA(Pro) in a two-step reaction: proline is first activated by ATP to form Pro-AMP and then transferred to the acceptor end of tRNA(Pro). As ProRS can inadvertently accommodate and process non-cognate amino acids such as alanine and cysteine, to avoid such errors it has two additional distinct editing activities against alanine. One activity is designated as 'pretransfer' editing and involves the tRNA(Pro)-independent hydrolysis of activated Ala-AMP. The other activity is designated 'posttransfer' editing and involves deacylation of mischarged Ala-tRNA(Pro). The misacylated Cys-tRNA(Pro) is not edited by ProRS. The polypeptide is Proline--tRNA ligase (Limosilactobacillus fermentum (strain NBRC 3956 / LMG 18251) (Lactobacillus fermentum)).